The primary structure comprises 291 residues: Tyrosine recombinase XerA (291 aa).

A Core-binding (CB) domain is found at 9–102; the sequence is PESGDLYNAF…AVRRFLKWIN (94 aa). The Tyr recombinase domain maps to 115-279; the sequence is KEVKALDEIQ…VLDDLRNEYL (165 aa). Catalysis depends on residues arginine 150, lysine 175, histidine 231, arginine 234, and histidine 257. The active-site O-(3'-phospho-DNA)-tyrosine intermediate is the tyrosine 266.

Belongs to the 'phage' integrase family. XerA subfamily.

The protein resides in the cytoplasm. Its function is as follows. Site-specific tyrosine recombinase, which acts by catalyzing the cutting and rejoining of the recombining DNA molecules. Probably involved in the resolution of chromosome dimers. Binds to the dif site. This chain is Tyrosine recombinase XerA, found in Saccharolobus solfataricus (strain ATCC 35092 / DSM 1617 / JCM 11322 / P2) (Sulfolobus solfataricus).